The sequence spans 268 residues: Type III pantothenate kinase 1 (268 aa).

An ATP-binding site is contributed by 6-13 (DIGNTNIT). Substrate-binding positions include tyrosine 100 and 107 to 110 (GTDR). The Proton acceptor role is filled by aspartate 109. Aspartate 133 contacts K(+). Position 136 (threonine 136) interacts with ATP.

Belongs to the type III pantothenate kinase family. In terms of assembly, homodimer. It depends on NH4(+) as a cofactor. K(+) is required as a cofactor.

It localises to the cytoplasm. It catalyses the reaction (R)-pantothenate + ATP = (R)-4'-phosphopantothenate + ADP + H(+). It functions in the pathway cofactor biosynthesis; coenzyme A biosynthesis; CoA from (R)-pantothenate: step 1/5. Functionally, catalyzes the phosphorylation of pantothenate (Pan), the first step in CoA biosynthesis. This is Type III pantothenate kinase 1 from Symbiobacterium thermophilum (strain DSM 24528 / JCM 14929 / IAM 14863 / T).